The sequence spans 99 residues: Putative RNA-binding protein RbpE (99 aa).

The 78-residue stretch at 2-79 (SIYVGNLSYS…RVLKVNKARP (78 aa)) folds into the RRM domain. Residues 78 to 99 (RPREEKGARSGGGSWSRNNGGY) form a disordered region. Residues 86–99 (RSGGGSWSRNNGGY) show a composition bias toward gly residues.

The protein is Putative RNA-binding protein RbpE (rbpE) of Nostoc sp. (strain PCC 7120 / SAG 25.82 / UTEX 2576).